The sequence spans 234 residues: Thrombin-like enzyme acutin (234 aa).

Residue Met1 is a propeptide. The region spanning 2–225 is the Peptidase S1 domain; that stretch reads VIGGDECDIN…YTDWIQRNIA (224 aa). 6 cysteine pairs are disulfide-bonded: Cys8/Cys140, Cys27/Cys43, Cys75/Cys232, Cys119/Cys186, Cys151/Cys165, and Cys176/Cys201. N-linked (GlcNAc...) asparagine glycosylation is present at Asn21. Catalysis depends on charge relay system residues His42 and Asp87. Ser180 functions as the Charge relay system in the catalytic mechanism.

Belongs to the peptidase S1 family. Snake venom subfamily. As to quaternary structure, monomer. In terms of tissue distribution, expressed by the venom gland.

The protein resides in the secreted. Thrombin-like snake venom serine protease. Has arginyl esterase and fibrinogen clotting activities. The chain is Thrombin-like enzyme acutin from Deinagkistrodon acutus (Hundred-pace snake).